The chain runs to 288 residues: Transmembrane protein 163 (288 aa).

A compositionally biased stretch (basic and acidic residues) spans 1–11; it reads MERAPGSERRS. The segment at 1–64 is disordered; that stretch reads MERAPGSERR…ESGQFSDGFE (64 aa). Residues 1–87 lie on the Cytoplasmic side of the membrane; that stretch reads MERAPGSERR…HEAQNYRKKA (87 aa). Position 11 is a phosphoserine (serine 11). The span at 12–24 shows a compositional bias: pro residues; sequence PPGPGVPRPPPRG. The segment covering 25-42 has biased composition (low complexity); that stretch reads HAPSTAAPAPNPAPLSSS. The interval 41 to 71 is required for interaction with MCOLN1; sequence SSMQPDEERQPRISESGQFSDGFEDRGLLES. 3 positions are modified to phosphoserine: serine 54, serine 56, and serine 60. A helical membrane pass occupies residues 88–108; sequence LWVSWLSIIVTLALAVAAFTV. The Extracellular segment spans residues 109 to 115; the sequence is SVMRYSA. The chain crosses the membrane as a helical span at residues 116–136; that stretch reads SAFGFAFDAILDVLSSAIVLW. Over 137–149 the chain is Cytoplasmic; sequence RYSNAAAVHSAHR. The helical transmembrane segment at 150–170 threads the bilayer; that stretch reads EYIACVILGVIFLLSSICIVV. Residues 171–186 are Extracellular-facing; sequence KAIHDLSTRLLPEVDD. The chain crosses the membrane as a helical span at residues 187–207; that stretch reads FLFSVSILSGILCSVLAVLKF. At 208–216 the chain is on the cytoplasmic side; the sequence is MLGKVLTSR. Residues 217 to 237 traverse the membrane as a helical segment; it reads ALITDGFNSLVGGVMGFSILL. The Extracellular segment spans residues 238 to 254; that stretch reads SAEVFKHNAAVWYLDGS. The chain crosses the membrane as a helical span at residues 255 to 275; that stretch reads IGVLIGLTIFAYGVKLLIDMV. At 276–288 the chain is on the cytoplasmic side; that stretch reads PRVRQTRHYEMFE.

This sequence belongs to the TMEM163 family. As to quaternary structure, homodimer. Interacts with MCOLN1. Interacts with SLC30A1, SLC30A2, SLC30A3 and SLC30A4. As to expression, strongly expressed in brain. Also detected in lung, liver, kidney and spleen. Mainly expressed in the glutaminergic neuron subpopulations.

It localises to the cytoplasmic vesicle. Its subcellular location is the secretory vesicle. The protein localises to the synaptic vesicle membrane. It is found in the early endosome membrane. The protein resides in the late endosome membrane. It localises to the lysosome membrane. Its subcellular location is the cell membrane. It catalyses the reaction Zn(2+)(in) = Zn(2+)(out). In terms of biological role, zinc ion transporter that mediates zinc efflux and plays a crucial role in intracellular zinc homeostasis. Binds the divalent cations Zn(2+), Ni(2+), and to a minor extent Cu(2+). Is a functional modulator of P2X purinoceptors, including P2RX1, P2RX3, P2RX4 and P2RX7. Plays a role in central nervous system development and is required for myelination, and survival and proliferation of oligodendrocytes. The polypeptide is Transmembrane protein 163 (Tmem163) (Rattus norvegicus (Rat)).